The sequence spans 67 residues: Small ribosomal subunit protein bS21 (67 aa).

This sequence belongs to the bacterial ribosomal protein bS21 family.

The sequence is that of Small ribosomal subunit protein bS21 from Granulibacter bethesdensis (strain ATCC BAA-1260 / CGDNIH1).